A 597-amino-acid chain; its full sequence is mRNA-capping enzyme (597 aa).

Residues 1 to 212 (MAYNKIPPRW…DEDGKKDSEP (212 aa)) are TPase. One can recognise a Tyrosine-protein phosphatase domain in the interval 25–183 (LPLKTMLGPR…FRRYGDIEEA (159 aa)). Residue cysteine 126 is the Phosphocysteine intermediate of the active site. The interval 181 to 221 (EEAPPPPVLPDWCFEDEDEEDEDEDGKKDSEPGSSASFSKR) is disordered. Residues 193–204 (CFEDEDEEDEDE) show a composition bias toward acidic residues. The GTase stretch occupies residues 229–597 (GAIFLEGITV…PPPKRLHRPT (369 aa)). Catalysis depends on lysine 294, which acts as the N6-GMP-lysine intermediate. Residues arginine 299, arginine 315, 343 to 345 (DGE), 458 to 460 (KWK), and 528 to 533 (RQRIDK) contribute to the GTP site. The interaction with POLR2A stretch occupies residues 330-386 (RKDLRMHLSNTLLDGEMIIDKVNGQAVPRYLIYDIIKFNAQPVGDCDFNIRLQCIER). A disordered region spans residues 573–597 (KRKYPLDPDTELMPPPPPKRLHRPT).

It in the N-terminal section; belongs to the non-receptor class of the protein-tyrosine phosphatase family. This sequence in the C-terminal section; belongs to the eukaryotic GTase family. Interacts with SUPT5H and RNMT. Interacts with POLR2A (via C-terminus); this enhances guanylyltransferase activity. Binds (via GTase domain) to the elongating phosphorylated form of RNA polymerase II; can form direct interactions with the phosphorylated POLR2A C-terminal domain and indirect interactions via bound RNA.

The protein resides in the nucleus. The catalysed reaction is a 5'-end triphospho-ribonucleoside in mRNA + H2O = a 5'-end diphospho-ribonucleoside in mRNA + phosphate + H(+). It catalyses the reaction a 5'-end diphospho-ribonucleoside in mRNA + GTP + H(+) = a 5'-end (5'-triphosphoguanosine)-ribonucleoside in mRNA + diphosphate. RNA triphosphatase activity is inhibited by vanadate, iodoacetate and magnesium. In terms of biological role, bifunctional mRNA-capping enzyme exhibiting RNA 5'-triphosphate monophosphatase activity in the N-terminal part and mRNA guanylyltransferase activity in the C-terminal part. Catalyzes the first two steps of cap formation: by removing the gamma-phosphate from the 5'-triphosphate end of nascent mRNA to yield a diphosphate end, and by transferring the GMP moiety of GTP to the 5'-diphosphate terminus of RNA via a covalent enzyme-GMP reaction intermediate. The polypeptide is mRNA-capping enzyme (Rngtt) (Mus musculus (Mouse)).